We begin with the raw amino-acid sequence, 205 residues long: Dephospho-CoA kinase (205 aa).

Residues 4 to 204 (VVGLTGGIAS…QYYLTLATQQ (201 aa)) form the DPCK domain. 12–17 (ASGKTT) serves as a coordination point for ATP.

This sequence belongs to the CoaE family.

Its subcellular location is the cytoplasm. The enzyme catalyses 3'-dephospho-CoA + ATP = ADP + CoA + H(+). Its pathway is cofactor biosynthesis; coenzyme A biosynthesis; CoA from (R)-pantothenate: step 5/5. Functionally, catalyzes the phosphorylation of the 3'-hydroxyl group of dephosphocoenzyme A to form coenzyme A. In Haemophilus ducreyi (strain 35000HP / ATCC 700724), this protein is Dephospho-CoA kinase.